The primary structure comprises 217 residues: MLHSYFTVKEAGEHEIVIEKSRFICHLSRVSTEQEAQEFIQKIKKQHWNATHNCSAYVIGENDHIQKANDDGEPSGTAGVPMLEVLKKRRLKDTCAVVTRYFGGIKLGAGGLIRAYGKSVSEGLNHIGVVERKLMRIMHTSADYTWLGKIENELRESQFLLKEIHYSENVEFETYVEEKETNAFSEWMTELTNGKSDIKEGELTYLEKAVNHIKETE.

The protein belongs to the IMPACT family.

The chain is IMPACT family member YvyE (yvyE) from Bacillus subtilis (strain 168).